A 327-amino-acid chain; its full sequence is tRNA pseudouridine synthase B (327 aa).

The active-site Nucleophile is Asp83.

It belongs to the pseudouridine synthase TruB family. Type 1 subfamily.

It carries out the reaction uridine(55) in tRNA = pseudouridine(55) in tRNA. Functionally, responsible for synthesis of pseudouridine from uracil-55 in the psi GC loop of transfer RNAs. The protein is tRNA pseudouridine synthase B of Mesomycoplasma hyopneumoniae (strain 232) (Mycoplasma hyopneumoniae).